Here is a 28-residue protein sequence, read N- to C-terminus: Cruzioseptin-10 (28 aa).

In terms of tissue distribution, expressed by the skin glands.

The protein localises to the secreted. Its function is as follows. Has antimicrobial activity. The polypeptide is Cruzioseptin-10 (Cruziohyla calcarifer (Splendid leaf frog)).